A 105-amino-acid polypeptide reads, in one-letter code: Thioredoxin (105 aa).

One can recognise a Thioredoxin domain in the interval 1-105 (MANNVMDSSF…SLLDWINKSI (105 aa)). Cys30 and Cys33 form a disulfide bridge.

Belongs to the thioredoxin family.

Its function is as follows. Component of the thioredoxin-thioredoxin reductase system. Participates in various redox reactions through the reversible oxidation of its active center dithiol to a disulfide and catalyzes dithiol-disulfide exchange reactions. The chain is Thioredoxin (trxA) from Rickettsia conorii (strain ATCC VR-613 / Malish 7).